Consider the following 404-residue polypeptide: MKDKIKTKILSPFLYFLKSESSSGIILLICAIAAIMIANSSFSGGYEHIFHTNITIGYGVFSLSMSVLHWINDGLMAIFFLVVGMEIKREVVFGELKSFKRTILPISAAIGGMIVPAIIYALFNYKEPTITGWGIPMATDIAFALGMLSLVAKNAPKGIVVFLTALAIVDDLGAIIVIAIFYNSQISWIALLLGLIVFATLILANKFKIKYTSIYIILGIILWICLLKSGIHATIAGVLLGMSLPIGENIHKFKTSILYKLEHILTPWSSFVIMPIFAFANAGIIINTDNFSGSLFSPASLGIIFGLFVGKQIGIFGTSFILIKLKIAKFPSNVTKRHLYGASVFGGIGFTMSIFVSSLSFADANILSEAKMCIMIASILAATYGTIVFKFINFKNEKLNYKQS.

The next 11 membrane-spanning stretches (helical) occupy residues 24-44 (GIILLICAIAAIMIANSSFSG), 67-87 (VLHWINDGLMAIFFLVVGMEI), 103-123 (ILPISAAIGGMIVPAIIYALF), 132-152 (GWGIPMATDIAFALGMLSLVA), 161-181 (VFLTALAIVDDLGAIIVIAIF), 184-204 (SQISWIALLLGLIVFATLILA), 216-236 (IILGIILWICLLKSGIHATIA), 266-286 (TPWSSFVIMPIFAFANAGIII), 303-323 (IIFGLFVGKQIGIFGTSFILI), 339-359 (LYGASVFGGIGFTMSIFVSSL), and 372-392 (MCIMIASILAATYGTIVFKFI).

This sequence belongs to the NhaA Na(+)/H(+) (TC 2.A.33) antiporter family.

The protein localises to the cell membrane. The enzyme catalyses Na(+)(in) + 2 H(+)(out) = Na(+)(out) + 2 H(+)(in). Na(+)/H(+) antiporter that extrudes sodium in exchange for external protons. The sequence is that of Na(+)/H(+) antiporter NhaA 2 from Clostridium beijerinckii (strain ATCC 51743 / NCIMB 8052) (Clostridium acetobutylicum).